We begin with the raw amino-acid sequence, 1496 residues long: DNA-directed RNA polymerase subunit beta' (1496 aa).

Zn(2+)-binding residues include Cys70, Cys72, Cys85, and Cys88. Residues Asp461, Asp463, and Asp465 each coordinate Mg(2+). Cys908, Cys982, Cys989, and Cys992 together coordinate Zn(2+). Positions 1467-1496 (DKDMQVEGESEVPAIPPVAEGSAPEAPPAE) are disordered.

Belongs to the RNA polymerase beta' chain family. The RNAP catalytic core consists of 2 alpha, 1 beta, 1 beta' and 1 omega subunit. When a sigma factor is associated with the core the holoenzyme is formed, which can initiate transcription. Mg(2+) is required as a cofactor. Requires Zn(2+) as cofactor.

It catalyses the reaction RNA(n) + a ribonucleoside 5'-triphosphate = RNA(n+1) + diphosphate. DNA-dependent RNA polymerase catalyzes the transcription of DNA into RNA using the four ribonucleoside triphosphates as substrates. The chain is DNA-directed RNA polymerase subunit beta' from Paramagnetospirillum magneticum (strain ATCC 700264 / AMB-1) (Magnetospirillum magneticum).